Reading from the N-terminus, the 207-residue chain is Large ribosomal subunit protein uL4 (207 aa).

Residues 48-89 (THKVKNRSEVSGGGRKPWRQKGTGRARQGSIRSPQWRGGGTV) are disordered.

This sequence belongs to the universal ribosomal protein uL4 family. Part of the 50S ribosomal subunit.

One of the primary rRNA binding proteins, this protein initially binds near the 5'-end of the 23S rRNA. It is important during the early stages of 50S assembly. It makes multiple contacts with different domains of the 23S rRNA in the assembled 50S subunit and ribosome. Its function is as follows. Forms part of the polypeptide exit tunnel. The protein is Large ribosomal subunit protein uL4 of Bacillus cytotoxicus (strain DSM 22905 / CIP 110041 / 391-98 / NVH 391-98).